Here is a 244-residue protein sequence, read N- to C-terminus: Isoprenyl transferase (244 aa).

Asp23 is an active-site residue. Asp23 is a Mg(2+) binding site. Substrate contacts are provided by residues 24 to 27 (GNGR), Trp28, Arg36, His40, and 68 to 70 (STE). Asn71 serves as the catalytic Proton acceptor. Substrate-binding positions include Trp72, Arg74, Arg191, and 197 to 199 (RMS). Mg(2+) is bound at residue Glu210.

The protein belongs to the UPP synthase family. As to quaternary structure, homodimer. Requires Mg(2+) as cofactor.

Functionally, catalyzes the condensation of isopentenyl diphosphate (IPP) with allylic pyrophosphates generating different type of terpenoids. The protein is Isoprenyl transferase of Lactococcus lactis subsp. lactis (strain IL1403) (Streptococcus lactis).